A 317-amino-acid chain; its full sequence is Melanocyte-stimulating hormone receptor (317 aa).

Topologically, residues 1–37 are extracellular; it reads MAVQGFQRRLLGSLNSTPTAIPQLGLAANQTGARCLE. Asparagine 29 carries N-linked (GlcNAc...) asparagine glycosylation. The chain crosses the membrane as a helical span at residues 38–63; sequence VSIPDGLFLSLGLVSLVENVLVVATI. The Cytoplasmic portion of the chain corresponds to 64–72; sequence AKNRNLHSP. Residues 73–93 form a helical membrane-spanning segment; it reads TYCFICCLALSDLLVSGGNVL. Over 94-118 the chain is Extracellular; it reads ETVVILLLEASALAARAAVVQPLDN. A helical membrane pass occupies residues 119 to 140; it reads VIDVITCSSMVSSLCFLGAIAV. Over 141 to 163 the chain is Cytoplasmic; that stretch reads DRYVSIFYALRYHSIVTLPRARQ. Residues 164-183 traverse the membrane as a helical segment; it reads AIAAIWVASVLFSTLFIAYY. At 184–191 the chain is on the extracellular side; it reads DHAAVLLC. Residues 192-211 form a helical membrane-spanning segment; that stretch reads LVVFFLAMLVXMAVLYVHML. Topologically, residues 212 to 240 are cytoplasmic; it reads ARACQHAQGIARLHKRQRPLHQGFGLKGA. A helical membrane pass occupies residues 241–266; the sequence is VTLTILLGIFFLCWGPFFLHLTLIVL. The Extracellular segment spans residues 267–279; that stretch reads CPQHPTCSCIFKN. The helical transmembrane segment at 280-300 threads the bilayer; it reads FNLFLTLIICNAIIDPLIYAF. The Cytoplasmic portion of the chain corresponds to 301–317; that stretch reads RRQELRRTLKEGLTCSW. Residue cysteine 315 is the site of S-palmitoyl cysteine attachment.

This sequence belongs to the G-protein coupled receptor 1 family. Interacts with MGRN1, but does not undergo MGRN1-mediated ubiquitination; this interaction competes with GNAS-binding and thus inhibits agonist-induced cAMP production. Interacts with OPN3; the interaction results in a decrease in MC1R-mediated cAMP signaling and ultimately a decrease in melanin production in melanocytes.

It localises to the cell membrane. In terms of biological role, receptor for MSH (alpha, beta and gamma) and ACTH. The activity of this receptor is mediated by G proteins which activate adenylate cyclase. Mediates melanogenesis, the production of eumelanin (black/brown) and phaeomelanin (red/yellow), via regulation of cAMP signaling in melanocytes. The protein is Melanocyte-stimulating hormone receptor (MC1R) of Hylobates muelleri (Mueller's Bornean gibbon).